The primary structure comprises 605 residues: Protein phosphatase 1D (605 aa).

Positions Met1–Phe101 are interaction with CHEK1. A PPM-type phosphatase domain is found at Gly8–Ile375. The interval Val28–Arg90 is disordered. 2 positions are modified to phosphoserine: Ser40 and Ser85. Residues Asp105, Gly106, Asp314, and Asp366 each coordinate Mn(2+). The tract at residues Ser516–Gly591 is disordered. Composition is skewed to polar residues over residues Pro530 to Gly544 and Leu555 to Lys577. Basic residues predominate over residues Thr579–Lys588.

This sequence belongs to the PP2C family. As to quaternary structure, interacts with CHEK1 and CHEK2; dephosphorylates them. Interacts with MAPK14. The cofactor is Mg(2+). Mn(2+) serves as cofactor. In terms of tissue distribution, expressed in fetal and adult brain. Also detected in fetal liver and skeletal muscle, but not in their adult counterparts.

It is found in the nucleus. The protein resides in the cytoplasm. The protein localises to the cytosol. The enzyme catalyses O-phospho-L-seryl-[protein] + H2O = L-seryl-[protein] + phosphate. The catalysed reaction is O-phospho-L-threonyl-[protein] + H2O = L-threonyl-[protein] + phosphate. Functionally, involved in the negative regulation of p53 expression. Required for the relief of p53-dependent checkpoint mediated cell cycle arrest. Binds to and dephosphorylates 'Ser-15' of TP53 and 'Ser-345' of CHEK1 which contributes to the functional inactivation of these proteins. Mediates MAPK14 dephosphorylation and inactivation. Is also an important regulator of global heterochromatin silencing and critical in maintaining genome integrity. The polypeptide is Protein phosphatase 1D (PPM1D) (Homo sapiens (Human)).